Reading from the N-terminus, the 180-residue chain is Ubiquitin-conjugating enzyme E2 20 (180 aa).

Residues 1–33 (MAAVNGYQGNTPADPPASNGSKQPAAPTKTVDS) are disordered. The region spanning 35–180 (SVLKRLQSEL…VEKLYKPPSA (146 aa)) is the UBC core domain. Cys-119 functions as the Glycyl thioester intermediate in the catalytic mechanism.

Belongs to the ubiquitin-conjugating enzyme family. Expressed in all tissues with cell division activities and in mature leaves.

It carries out the reaction S-ubiquitinyl-[E1 ubiquitin-activating enzyme]-L-cysteine + [E2 ubiquitin-conjugating enzyme]-L-cysteine = [E1 ubiquitin-activating enzyme]-L-cysteine + S-ubiquitinyl-[E2 ubiquitin-conjugating enzyme]-L-cysteine.. It participates in protein modification; protein ubiquitination. In terms of biological role, accepts the ubiquitin from the E1 complex and catalyzes its covalent attachment to other proteins. This chain is Ubiquitin-conjugating enzyme E2 20 (UBC20), found in Arabidopsis thaliana (Mouse-ear cress).